Here is a 339-residue protein sequence, read N- to C-terminus: Anthranilate phosphoribosyltransferase (339 aa).

5-phospho-alpha-D-ribose 1-diphosphate is bound by residues G79, G82–D83, T87, N89–T92, K107–S115, and S119. G79 lines the anthranilate pocket. S91 contributes to the Mg(2+) binding site. N110 is a binding site for anthranilate. R165 is a binding site for anthranilate. 2 residues coordinate Mg(2+): D224 and E225.

Belongs to the anthranilate phosphoribosyltransferase family. In terms of assembly, homodimer. The cofactor is Mg(2+).

The catalysed reaction is N-(5-phospho-beta-D-ribosyl)anthranilate + diphosphate = 5-phospho-alpha-D-ribose 1-diphosphate + anthranilate. The protein operates within amino-acid biosynthesis; L-tryptophan biosynthesis; L-tryptophan from chorismate: step 2/5. Functionally, catalyzes the transfer of the phosphoribosyl group of 5-phosphorylribose-1-pyrophosphate (PRPP) to anthranilate to yield N-(5'-phosphoribosyl)-anthranilate (PRA). The sequence is that of Anthranilate phosphoribosyltransferase from Geobacillus kaustophilus (strain HTA426).